The sequence spans 434 residues: Protein maelstrom homolog (434 aa).

Positions 4 to 73 (RKASRNAYYF…AQGKDPGPSE (70 aa)) form a DNA-binding region, HMG box. The interval 357 to 385 (SHFNSSNEEQRSNTPIGDYPSRAKISGQN) is disordered.

The protein belongs to the maelstrom family. As to quaternary structure, interacts with SMARCB1, SIN3B and DDX4. Interacts with piRNA-associated proteins TDRD1, PIWIL1 and PIWIL2. Interacts with TEX19. Testis-specific. Expressed in various cancer cell lines, probably due to demethylation of its promoter.

The protein resides in the cytoplasm. The protein localises to the nucleus. Its function is as follows. Plays a central role during spermatogenesis by repressing transposable elements and preventing their mobilization, which is essential for the germline integrity. Acts via the piRNA metabolic process, which mediates the repression of transposable elements during meiosis by forming complexes composed of piRNAs and Piwi proteins and governs the methylation and subsequent repression of transposons. Its association with piP-bodies suggests a participation in the secondary piRNAs metabolic process. Required for the localization of germ-cell factors to the meiotic nuage. The polypeptide is Protein maelstrom homolog (MAEL) (Homo sapiens (Human)).